The following is a 245-amino-acid chain: 1-(5-phosphoribosyl)-5-[(5-phosphoribosylamino)methylideneamino] imidazole-4-carboxamide isomerase (245 aa).

D8 acts as the Proton acceptor in catalysis. Residue D130 is the Proton donor of the active site.

The protein belongs to the HisA/HisF family.

Its subcellular location is the cytoplasm. It carries out the reaction 1-(5-phospho-beta-D-ribosyl)-5-[(5-phospho-beta-D-ribosylamino)methylideneamino]imidazole-4-carboxamide = 5-[(5-phospho-1-deoxy-D-ribulos-1-ylimino)methylamino]-1-(5-phospho-beta-D-ribosyl)imidazole-4-carboxamide. The protein operates within amino-acid biosynthesis; L-histidine biosynthesis; L-histidine from 5-phospho-alpha-D-ribose 1-diphosphate: step 4/9. This chain is 1-(5-phosphoribosyl)-5-[(5-phosphoribosylamino)methylideneamino] imidazole-4-carboxamide isomerase, found in Pseudomonas putida (strain GB-1).